The primary structure comprises 712 residues: Amine oxidase [copper-containing] gamma 1 (712 aa).

Positions 1–24 (MAEPSFARLFLLFFSFLLIFATYS) are cleaved as a signal peptide. Residues asparagine 146 and asparagine 173 are each glycosylated (N-linked (GlcNAc...) asparagine). A disulfide bridge links cysteine 188 with cysteine 210. A substrate-binding site is contributed by 352 to 363 (YMDAGELGLGPT). Aspartate 354 acts as the Proton acceptor in catalysis. A disulfide bond links cysteine 373 and cysteine 399. 439–444 (VGNYDY) provides a ligand contact to substrate. The active-site Schiff-base intermediate with substrate; via topaquinone is the tyrosine 442. Tyrosine 442 is modified (2',4',5'-topaquinone). Residues histidine 499 and histidine 501 each contribute to the Cu cation site. The Mn(2+) site is built by aspartate 508, methionine 509, and aspartate 510. 2 N-linked (GlcNAc...) asparagine glycosylation sites follow: asparagine 516 and asparagine 617. Mn(2+) contacts are provided by aspartate 651 and isoleucine 652. Histidine 662 provides a ligand contact to Cu cation.

Belongs to the copper/topaquinone oxidase family. In terms of assembly, homodimer. Requires Cu cation as cofactor. The cofactor is Zn(2+). L-topaquinone is required as a cofactor. Mn(2+) serves as cofactor. Post-translationally, topaquinone (TPQ) is generated by copper-dependent autoxidation of a specific tyrosyl residue. As to expression, mostly expressed in roots, stems and flowers, and, at lower levels, in leaves and cotyledons.

The protein resides in the secreted. The protein localises to the extracellular space. It is found in the apoplast. It carries out the reaction a primary methyl amine + O2 + H2O = an aldehyde + H2O2 + NH4(+). The protein operates within amine and polyamine degradation; putrescine degradation. Copper amine oxidase that can use putrescine and spermidine as substrates. Required for abscisic acid- (ABA) and polyamine- (PA) and H(2)O(2)-dependent induced nitric oxide (NO) biosynthesis. Involved in ABA signal transduction and in responses to osmotic stress. This Arabidopsis thaliana (Mouse-ear cress) protein is Amine oxidase [copper-containing] gamma 1.